A 393-amino-acid polypeptide reads, in one-letter code: Protein TsgA (393 aa).

The next 12 membrane-spanning stretches (helical) occupy residues 11 to 31 (WISF…GMVM), 51 to 71 (FLNA…EIVP), 78 to 98 (FGFI…SLAL), 101 to 121 (AAMF…TFLI), 134 to 154 (LLFT…VAAF), 162 to 182 (WYWV…LTFG), 206 to 226 (IGVL…LGFI), 245 to 265 (ALVS…SFIL), 273 to 293 (ILTV…TGTQ), 298 to 318 (WFIL…ITLG), 332 to 352 (FILT…GPIV), and 361 to 381 (LLTA…LGFV).

The protein belongs to the major facilitator superfamily. TsgA family.

It is found in the cell inner membrane. In Salmonella arizonae (strain ATCC BAA-731 / CDC346-86 / RSK2980), this protein is Protein TsgA.